The sequence spans 408 residues: Gustatory receptor 10a (408 aa).

Topologically, residues 1-20 are cytoplasmic; that stretch reads MTSPDERKSFWERHEFKFYR. Residues 21-38 form a helical membrane-spanning segment; that stretch reads YGHVYALIYGQVVIDYVP. At 39–48 the chain is on the extracellular side; the sequence is QRALKRGVKV. A helical membrane pass occupies residues 49-69; that stretch reads LLIAYGHLFSMLLIVVLPGYF. Residues 70 to 86 are Cytoplasmic-facing; the sequence is CYHFRTLTDTLDRRLQL. The chain crosses the membrane as a helical span at residues 87-107; sequence LFYVSFTNTAIKYATVIVTYV. Over 108–144 the chain is Extracellular; sequence ANTVHFEAINQRCTMQRTHLEFEFKNAPQEPKRPFEF. The chain crosses the membrane as a helical span at residues 145–165; sequence FMYFKFCLINLMMMIQVCGIF. Topologically, residues 166 to 270 are cytoplasmic; sequence AQYGEVGKGS…RESFRMHQFQ (105 aa). The helical transmembrane segment at 271–291 threads the bilayer; that stretch reads LIGLMLSTLINNLTNFYTLFH. Residues 292-304 are Extracellular-facing; it reads MLAKQSLEEVSYP. The chain crosses the membrane as a helical span at residues 305-325; it reads VVVGSVYATGFYIDTYIVALI. The Cytoplasmic segment spans residues 326 to 381; it reads NEHIKLELEAVALTMRRFAEPREMDERLTREIEHLSLELLNYQPPMLCGLLHLDRR. The helical transmembrane segment at 382 to 402 threads the bilayer; it reads LVYLIAVTAFSYFITLVQFDL. Over 403–408 the chain is Extracellular; it reads YLRKKS.

This sequence belongs to the insect chemoreceptor superfamily. Gustatory receptor (GR) family. Gr10a subfamily. Expressed in the medial aspect of the third antennal segment, and in neurons of the terminal external chemosensory organ of larvae.

The protein resides in the cell membrane. Functionally, probable gustatory receptor which mediates acceptance or avoidance behavior, depending on its substrates. The protein is Gustatory receptor 10a (Gr10a) of Drosophila melanogaster (Fruit fly).